A 112-amino-acid chain; its full sequence is Nucleoid-associated protein CV_1611 (112 aa).

It belongs to the YbaB/EbfC family. Homodimer.

Its subcellular location is the cytoplasm. The protein localises to the nucleoid. Functionally, binds to DNA and alters its conformation. May be involved in regulation of gene expression, nucleoid organization and DNA protection. This Chromobacterium violaceum (strain ATCC 12472 / DSM 30191 / JCM 1249 / CCUG 213 / NBRC 12614 / NCIMB 9131 / NCTC 9757 / MK) protein is Nucleoid-associated protein CV_1611.